A 367-amino-acid chain; its full sequence is Fructose-1,6-bisphosphatase class 1 3 (367 aa).

The protein belongs to the FBPase class 1 family. Homotetramer.

The protein resides in the cytoplasm. The enzyme catalyses beta-D-fructose 1,6-bisphosphate + H2O = beta-D-fructose 6-phosphate + phosphate. It functions in the pathway carbohydrate biosynthesis; gluconeogenesis. The polypeptide is Fructose-1,6-bisphosphatase class 1 3 (Paraburkholderia phymatum (strain DSM 17167 / CIP 108236 / LMG 21445 / STM815) (Burkholderia phymatum)).